The primary structure comprises 92 residues: LKHEDTNLASSTILRPGMNKELLGILVSYKVKVNLMVSYGGILGGLPASDVGVELPLILIHPKPPHGERAVATSSEDIVVEEFTQQNSQTQS.

This sequence belongs to the arrestin family. Homodimer; disulfide-linked in response to retinal illumination. Interacts with CXCR4; the interaction is dependent on the C-terminal phosphorylation of CXCR4 and modulates the calcium ion mobilization activity of CXCR4. Interacts with GPR84. Retina and pineal gland.

The protein resides in the photoreceptor inner segment. The protein localises to the cell projection. Its subcellular location is the cilium. It is found in the photoreceptor outer segment. In terms of biological role, may play a role in an as yet undefined retina-specific signal transduction. Could bind to photoactivated-phosphorylated red/green opsins. This Rattus norvegicus (Rat) protein is Arrestin-C (Arr3).